Here is a 315-residue protein sequence, read N- to C-terminus: Aspartate carbamoyltransferase catalytic subunit (315 aa).

Positions 64 and 65 each coordinate carbamoyl phosphate. Lysine 92 contacts L-aspartate. Carbamoyl phosphate contacts are provided by arginine 114, histidine 142, and glutamine 145. L-aspartate contacts are provided by arginine 176 and arginine 230. Residues glycine 271 and proline 272 each coordinate carbamoyl phosphate.

It belongs to the aspartate/ornithine carbamoyltransferase superfamily. ATCase family. As to quaternary structure, heterododecamer (2C3:3R2) of six catalytic PyrB chains organized as two trimers (C3), and six regulatory PyrI chains organized as three dimers (R2).

It catalyses the reaction carbamoyl phosphate + L-aspartate = N-carbamoyl-L-aspartate + phosphate + H(+). It participates in pyrimidine metabolism; UMP biosynthesis via de novo pathway; (S)-dihydroorotate from bicarbonate: step 2/3. Catalyzes the condensation of carbamoyl phosphate and aspartate to form carbamoyl aspartate and inorganic phosphate, the committed step in the de novo pyrimidine nucleotide biosynthesis pathway. This is Aspartate carbamoyltransferase catalytic subunit from Lawsonia intracellularis (strain PHE/MN1-00).